We begin with the raw amino-acid sequence, 617 residues long: Proline--tRNA ligase (617 aa).

The protein belongs to the class-II aminoacyl-tRNA synthetase family. ProS type 1 subfamily. As to quaternary structure, homodimer.

The protein localises to the cytoplasm. The catalysed reaction is tRNA(Pro) + L-proline + ATP = L-prolyl-tRNA(Pro) + AMP + diphosphate. Functionally, catalyzes the attachment of proline to tRNA(Pro) in a two-step reaction: proline is first activated by ATP to form Pro-AMP and then transferred to the acceptor end of tRNA(Pro). As ProRS can inadvertently accommodate and process non-cognate amino acids such as alanine and cysteine, to avoid such errors it has two additional distinct editing activities against alanine. One activity is designated as 'pretransfer' editing and involves the tRNA(Pro)-independent hydrolysis of activated Ala-AMP. The other activity is designated 'posttransfer' editing and involves deacylation of mischarged Ala-tRNA(Pro). The misacylated Cys-tRNA(Pro) is not edited by ProRS. The chain is Proline--tRNA ligase from Streptococcus agalactiae serotype V (strain ATCC BAA-611 / 2603 V/R).